The chain runs to 29 residues: Cytochrome b6-f complex subunit 8 (29 aa).

A helical membrane pass occupies residues 3–23 (IVSIAWAALMVVFTFSLSLVV).

The protein belongs to the PetN family. As to quaternary structure, the 4 large subunits of the cytochrome b6-f complex are cytochrome b6, subunit IV (17 kDa polypeptide, PetD), cytochrome f and the Rieske protein, while the 4 small subunits are PetG, PetL, PetM and PetN. The complex functions as a dimer.

The protein resides in the plastid. Its subcellular location is the chloroplast thylakoid membrane. Component of the cytochrome b6-f complex, which mediates electron transfer between photosystem II (PSII) and photosystem I (PSI), cyclic electron flow around PSI, and state transitions. In Angiopteris evecta (Mule's foot fern), this protein is Cytochrome b6-f complex subunit 8.